The chain runs to 705 residues: Kinesin-like protein KIF2A (705 aa).

The disordered stretch occupies residues 65–185 (DLVPDEDIEP…QQELREKRAQ (121 aa)). Residue serine 75 is modified to Phosphoserine. Position 96 is a phosphothreonine (threonine 96). Serine 99 bears the Phosphoserine mark. Lysine 101 carries the N6-acetyllysine modification. The span at 122 to 139 (LPEQSSSAQQNGSVSDIS) shows a compositional bias: polar residues. Phosphoserine occurs at positions 134 and 139. The stretch at 153 to 186 (RRKSNCVKEVEKLQEKREKRRLQQQELREKRAQD) forms a coiled coil. Over residues 158–185 (CVKEVEKLQEKREKRRLQQQELREKRAQ) the composition is skewed to basic and acidic residues. The 331-residue stretch at 222-552 (RICVCVRKRP…LRYANRVKEL (331 aa)) folds into the Kinesin motor domain. ATP is bound at residue 312–319 (GQTGSGKT). Glutamine 572 bears the Phosphoserine mark. A coiled-coil region spans residues 659-698 (ATQLEAILEQKIDILTELRDKVKSFRAALQEEEQASKQIN).

It belongs to the TRAFAC class myosin-kinesin ATPase superfamily. Kinesin family. MCAK/KIF2 subfamily. In terms of assembly, interacts with AURKA and PLK1. Interacts with PSRC1. Interacts with MCRS1; the interaction enhances recruitment of KIF2A to the minus ends of spindle microtubules which promotes chromosome alignment.

It is found in the cytoplasm. The protein localises to the cytoskeleton. The protein resides in the microtubule organizing center. It localises to the centrosome. Its subcellular location is the spindle pole. It is found in the spindle. Functionally, plus end-directed microtubule-dependent motor required for normal brain development. May regulate microtubule dynamics during axonal growth. Required for normal progression through mitosis. Required for normal congress of chromosomes at the metaphase plate. Required for normal spindle dynamics during mitosis. Promotes spindle turnover. Implicated in formation of bipolar mitotic spindles. Has microtubule depolymerization activity. This is Kinesin-like protein KIF2A from Rattus norvegicus (Rat).